The sequence spans 148 residues: Gametocyte-specific factor 1-like (148 aa).

2 consecutive CHHC U11-48K-type zinc fingers follow at residues 6-33 and 40-67; these read FEIC…RRKN and MATC…VNRS. Cysteine 9, histidine 15, histidine 25, cysteine 29, cysteine 43, histidine 49, histidine 59, and cysteine 63 together coordinate Zn(2+). Positions 67 to 99 are disordered; the sequence is SAVEEEDTENPLKVSPPSSEQNDDTQQVSPCLP. Over residues 82–95 the composition is skewed to polar residues; it reads PPSSEQNDDTQQVS.

This sequence belongs to the UPF0224 (FAM112) family.

The sequence is that of Gametocyte-specific factor 1-like (GTSF1L) from Homo sapiens (Human).